The sequence spans 360 residues: Phosphoserine aminotransferase (360 aa).

Arginine 42 is a binding site for L-glutamate. Pyridoxal 5'-phosphate contacts are provided by residues 76-77 (AS), tryptophan 102, threonine 152, aspartate 172, and glutamine 195. An N6-(pyridoxal phosphate)lysine modification is found at lysine 196. 237–238 (NT) lines the pyridoxal 5'-phosphate pocket.

This sequence belongs to the class-V pyridoxal-phosphate-dependent aminotransferase family. SerC subfamily. Homodimer. Pyridoxal 5'-phosphate is required as a cofactor.

It localises to the cytoplasm. It carries out the reaction O-phospho-L-serine + 2-oxoglutarate = 3-phosphooxypyruvate + L-glutamate. The enzyme catalyses 4-(phosphooxy)-L-threonine + 2-oxoglutarate = (R)-3-hydroxy-2-oxo-4-phosphooxybutanoate + L-glutamate. It functions in the pathway amino-acid biosynthesis; L-serine biosynthesis; L-serine from 3-phospho-D-glycerate: step 2/3. Functionally, catalyzes the reversible conversion of 3-phosphohydroxypyruvate to phosphoserine and of 3-hydroxy-2-oxo-4-phosphonooxybutanoate to phosphohydroxythreonine. This chain is Phosphoserine aminotransferase, found in Bacillus cereus (strain ATCC 10987 / NRS 248).